The sequence spans 82 residues: DNA-directed RNA polymerase subunit Rpo5 (82 aa).

It belongs to the archaeal Rpo5/eukaryotic RPB5 RNA polymerase subunit family. In terms of assembly, part of the RNA polymerase complex.

The protein resides in the cytoplasm. It carries out the reaction RNA(n) + a ribonucleoside 5'-triphosphate = RNA(n+1) + diphosphate. Its function is as follows. DNA-dependent RNA polymerase (RNAP) catalyzes the transcription of DNA into RNA using the four ribonucleoside triphosphates as substrates. The sequence is that of DNA-directed RNA polymerase subunit Rpo5 from Thermococcus celer.